Reading from the N-terminus, the 614-residue chain is V-type proton ATPase catalytic subunit A (614 aa).

Residue 247-254 (GAFGCGKT) coordinates ATP.

It belongs to the ATPase alpha/beta chains family. As to quaternary structure, V-ATPase is a heteromultimeric enzyme made up of two complexes: the ATP-hydrolytic V1 complex and the proton translocation V0 complex. The V1 complex consists of three catalytic AB heterodimers that form a heterohexamer, three peripheral stalks each consisting of EG heterodimers, one central rotor including subunits D and F, and the regulatory subunits C and H. The proton translocation complex V0 consists of the proton transport subunit a, a ring of proteolipid subunits c9c'', rotary subunit d, subunits e and f, and the accessory subunits VhaAC45 and ATP6AP2.

It carries out the reaction ATP + H2O + 4 H(+)(in) = ADP + phosphate + 5 H(+)(out). Its activity is regulated as follows. ATP hydrolysis occurs at the interface between the nucleotide-binding domains of subunits A and B. ATP hydrolysis triggers a conformational change in the subunits D and F, which induces a shift of subunit d. The c-ring is subsequently rotated and results in a continuous proton translocation across the membrane. Its function is as follows. Catalytic subunit of the V1 complex of vacuolar(H+)-ATPase (V-ATPase), a multisubunit enzyme composed of a peripheral complex (V1) that hydrolyzes ATP and a membrane integral complex (V0) that translocates protons. V-ATPase is responsible for acidifying and maintaining the pH of intracellular compartments and in some cell types, is targeted to the plasma membrane, where it is responsible for acidifying the extracellular environment. The chain is V-type proton ATPase catalytic subunit A from Anopheles gambiae (African malaria mosquito).